The following is a 344-amino-acid chain: Protein YIPF3 (344 aa).

Polar residues predominate over residues 1-12 (MSASQGSKNTNA). Positions 1 to 24 (MSASQGSKNTNAEPWGGFDDNIIQ) are disordered. Residues 1-146 (MSASQGSKNT…PVRMINFPQK (146 aa)) lie on the Cytoplasmic side of the membrane. A helical membrane pass occupies residues 147–167 (VAGELYGPMMLVFTLVAILLH). The Lumenal segment spans residues 168–185 (GMKTSGTVIREGTLMGTA). The helical transmembrane segment at 186–206 (IGTGFGYWLGVSSFIYFLAYL) threads the bilayer. Topologically, residues 207–212 (CNAQIT) are cytoplasmic. Residues 213–233 (MLQMLSLLGYGLFGHCVVLFI) traverse the membrane as a helical segment. The Lumenal segment spans residues 234 to 242 (TYNVHFHSL). A helical membrane pass occupies residues 243–263 (FYLLWMVIGGLSTLRMVAVLI). The Cytoplasmic segment spans residues 264–272 (SRTVGQTPR). The helical transmembrane segment at 273–293 (LILCGSLAALHMLFLLYLHFA) threads the bilayer. The Lumenal portion of the chain corresponds to 294 to 344 (YHKMVEGILDTLEGPNIPPIQRVARDVPVVASAVVNATVKSIAAIVQSQQL). The N-linked (GlcNAc...) asparagine glycan is linked to Asn-329.

The protein belongs to the YIP1 family.

The protein resides in the cell membrane. It is found in the golgi apparatus. It localises to the cis-Golgi network membrane. The protein localises to the cytoplasm. Its function is as follows. Involved in the maintenance of the Golgi structure. May play a role in hematopoiesis. The protein is Protein YIPF3 (yipf3) of Danio rerio (Zebrafish).